A 557-amino-acid chain; its full sequence is NADP-dependent malic enzyme (557 aa).

Residue tyrosine 91 is the Proton donor of the active site. Arginine 144 provides a ligand contact to NADP(+). Lysine 162 (proton acceptor) is an active-site residue. Positions 234, 235, and 258 each coordinate a divalent metal cation. Residues aspartate 258, 290–307 (GAGE…MAME), and asparagine 397 each bind NADP(+).

This sequence belongs to the malic enzymes family. Homotetramer. The cofactor is Mg(2+). It depends on Mn(2+) as a cofactor.

It localises to the cytoplasm. It carries out the reaction (S)-malate + NADP(+) = pyruvate + CO2 + NADPH. The enzyme catalyses oxaloacetate + H(+) = pyruvate + CO2. The polypeptide is NADP-dependent malic enzyme (ME1) (Anas platyrhynchos (Mallard)).